Consider the following 751-residue polypeptide: uncharacterized protein (751 aa).

Residues F73 to E169 form a disordered region. Residues A96–A109 show a composition bias toward low complexity. The segment covering L111 to S120 has biased composition (polar residues).

This is an uncharacterized protein from Invertebrate iridescent virus 3 (IIV-3).